Consider the following 607-residue polypeptide: Elongation factor 4 (607 aa).

Residues 11-193 enclose the tr-type G domain; it reads GKIRNFSIIA…QIVEKVPAPT (183 aa). GTP contacts are provided by residues 23–28 and 140–143; these read DHGKST and NKID.

This sequence belongs to the TRAFAC class translation factor GTPase superfamily. Classic translation factor GTPase family. LepA subfamily.

Its subcellular location is the cell membrane. The catalysed reaction is GTP + H2O = GDP + phosphate + H(+). Its function is as follows. Required for accurate and efficient protein synthesis under certain stress conditions. May act as a fidelity factor of the translation reaction, by catalyzing a one-codon backward translocation of tRNAs on improperly translocated ribosomes. Back-translocation proceeds from a post-translocation (POST) complex to a pre-translocation (PRE) complex, thus giving elongation factor G a second chance to translocate the tRNAs correctly. Binds to ribosomes in a GTP-dependent manner. This chain is Elongation factor 4, found in Streptococcus pneumoniae (strain JJA).